The sequence spans 367 residues: NADH-quinone oxidoreductase subunit D (367 aa).

Belongs to the complex I 49 kDa subunit family. NDH-1 is composed of 14 different subunits. Subunits NuoB, C, D, E, F, and G constitute the peripheral sector of the complex.

It localises to the cell membrane. The catalysed reaction is a quinone + NADH + 5 H(+)(in) = a quinol + NAD(+) + 4 H(+)(out). Functionally, NDH-1 shuttles electrons from NADH, via FMN and iron-sulfur (Fe-S) centers, to quinones in the respiratory chain. The immediate electron acceptor for the enzyme in this species is believed to be ubiquinone. Couples the redox reaction to proton translocation (for every two electrons transferred, four hydrogen ions are translocated across the cytoplasmic membrane), and thus conserves the redox energy in a proton gradient. This chain is NADH-quinone oxidoreductase subunit D, found in Dehalococcoides mccartyi (strain ATCC BAA-2100 / JCM 16839 / KCTC 5957 / BAV1).